Reading from the N-terminus, the 924-residue chain is Phosphatidate phosphatase LPIN1 (924 aa).

Residues 1 to 108 are N-LIP; it reads MNYVGQLAGQ…IPMYLATSPI (108 aa). Residues Ser106 and Ser150 each carry the phosphoserine modification. Disordered stretches follow at residues 133–248 and 269–297; these read PTTA…DCQR and FHASESPSGSRPSTPKSDSELVSKSADRL. A compositionally biased stretch (basic residues) spans 152–161; that stretch reads GKKRRKRRRK. The short motif at 153-158 is the Nuclear localization signal element; that stretch reads KKRRKR. Over residues 162–172 the composition is skewed to basic and acidic residues; it reads AQLDNLKRDDN. Residues 176–193 show a composition bias toward acidic residues; sequence SEDEDMFPIEMSSDEDTA. 2 stretches are compositionally biased toward polar residues: residues 218-229 and 273-284; these read PSISTHPQSASY and ESPSGSRPSTPK. Ser285, Ser287, and Ser293 each carry phosphoserine. Positions 285-297 are enriched in basic and acidic residues; it reads SDSELVSKSADRL. Residue Thr298 is modified to Phosphothreonine. 2 disordered regions span residues 314 to 426 and 446 to 490; these read QAAK…SRHL and LYFP…STSD. Ser328 is subject to Phosphoserine. Positions 343-358 are enriched in polar residues; that stretch reads AIHSESSDTFSDQSPT. Position 392 is a phosphoserine (Ser392). The span at 404-413 shows a compositional bias: polar residues; sequence NTAQSSSKTD. N6-acetyllysine is present on Lys459. The segment covering 461 to 476 has biased composition (polar residues); sequence ASDNGARSANQSPQSV. Phosphoserine is present on residues Ser468, Ser472, and Ser483. Glycyl lysine isopeptide (Lys-Gly) (interchain with G-Cter in SUMO) cross-links involve residues Lys599 and Lys629. The tract at residues 627 to 649 is disordered; it reads RIKHESSSSDEEHAAAKPSGSSH. The segment covering 628–641 has biased composition (basic and acidic residues); it reads IKHESSSSDEEHAA. Lys629 carries the post-translational modification N6-acetyllysine. Phosphoserine is present on residues Ser634 and Ser635. The tract at residues 658–864 is C-LIP; it reads YKKTLRLTSE…VNPKGELVQE (207 aa). Residues 712–716 carry the DXDXT motif motif; the sequence is DIDGT. The short motif at 723–727 is the LXXIL motif element; it reads LGHIL. 2 positions are modified to phosphoserine: Ser921 and Ser923.

This sequence belongs to the lipin family. As to quaternary structure, interacts (via LXXIL motif) with PPARA. Interacts with PPARGC1A. Interaction with PPARA and PPARGC1A leads to the formation of a complex that modulates gene transcription. Interacts with MEF2C. Requires Mg(2+) as cofactor. Post-translationally, phosphorylated at multiple sites in response to insulin. Phosphorylation is controlled by the mTOR signaling pathway. Phosphorylation is decreased by epinephrine. Phosphorylation may not directly affect the catalytic activity but may regulate the localization. Dephosphorylated by the CTDNEP1-CNEP1R1 complex. Phosphorylated at multiple sites by mTOR in response to insulin, leading to its inactivation. Phosphorylation does not affect the catalytic activity but regulates the localization. Phosphorylation is decreased by epinephrine. Dephosphorylated by the CTDNEP1-CNEP1R1 complex. Dephosphorylation following mTOR inhibition promotes its activity. In terms of processing, sumoylation is important in brain and is marginal in other tissues. Sumoylation facilitates nuclear localization of isoform 2 in neuronals cells and its transcriptional coactivator activity. Post-translationally, acetylation at Lys-459 and Lys-629 by KAT5 in response to fatty acids promotes translocation to the endoplasmic reticulum and synthesis of diacylglycerol. As to expression, specifically expressed in skeletal muscle. Also expressed prominently in adipose tissue, and testis. Lower expression also detected in kidney, lung, brain and liver. Predominant isoform in the liver. In terms of tissue distribution, predominant isoform in the brain.

The protein resides in the mitochondrion outer membrane. It localises to the cytoplasm. It is found in the nucleus membrane. Its subcellular location is the nucleus. The protein localises to the endoplasmic reticulum membrane. The enzyme catalyses a 1,2-diacyl-sn-glycero-3-phosphate + H2O = a 1,2-diacyl-sn-glycerol + phosphate. It carries out the reaction 1-octadecanoyl-2-(4Z,7Z,10Z,13Z,16Z,19Z-docosahexaenoyl)-sn-glycero-3-phosphate + H2O = 1-octadecanoyl-2-(4Z,7Z,10Z,13Z,16Z,19Z-docosahexaenoyl)-sn-glycerol + phosphate. It catalyses the reaction 1-octadecanoyl-2-(5Z,8Z,11Z,14Z-eicosatetraenoyl)-sn-glycero-3-phosphate + H2O = 1-octadecanoyl-2-(5Z,8Z,11Z,14Z-eicosatetraenoyl)-sn-glycerol + phosphate. The catalysed reaction is 1-octadecanoyl-2-(9Z,12Z-octadecadienoyl)-sn-glycero-3-phosphate + H2O = 1-octadecanoyl-2-(9Z,12Z)-octadecadienoyl-sn-glycerol + phosphate. The enzyme catalyses 1-octadecanoyl-2-(9Z-octadecenoyl)-sn-glycero-3-phosphate + H2O = 1-octadecanoyl-2-(9Z-octadecenoyl)-sn-glycerol + phosphate. It carries out the reaction 1-hexadecanoyl-2-(4Z,7Z,10Z,13Z,16Z,19Z-docosahexaenoyl)-sn-glycero-3-phosphate + H2O = 1-hexadecanoyl-2-(4Z,7Z,10Z,13Z,16Z,19Z-docosahexaenoyl)-sn-glycerol + phosphate. It catalyses the reaction 1,2-dioctadecanoyl-sn-glycero-3-phosphate + H2O = 1,2-dioctadecanoyl-sn-glycerol + phosphate. The catalysed reaction is 1-hexadecanoyl-2-(5Z,8Z,11Z,14Z-eicosatetraenoyl)-sn-glycero-3-phosphate + H2O = 1-hexadecanoyl-2-(5Z,8Z,11Z,14Z-eicosatetraenoyl)-sn-glycerol + phosphate. The enzyme catalyses 1-hexadecanoyl-2-(9Z,12Z-octadecadienoyl)-sn-glycero-3-phosphate + H2O = 1-hexadecanoyl-2-(9Z,12Z-octadecadienoyl)-sn-glycerol + phosphate. It carries out the reaction 1-hexadecanoyl-2-(9Z-octadecenoyl)-sn-glycero-3-phosphate + H2O = 1-hexadecanoyl-2-(9Z-octadecenoyl)-sn-glycerol + phosphate. It catalyses the reaction 1,2-di-(4Z,7Z,10Z,13Z,16Z,19Z-docosahexaenoyl)-sn-glycero-3-phosphate + H2O = 1,2-di-(4Z,7Z,10Z,13Z,16Z,19Z-docosahexaenoyl)-sn-glycerol + phosphate. The catalysed reaction is 1,2-di-(5Z,8Z,11Z,14Z)-eicosatetraenoyl-sn-glycero-3-phosphate + H2O = 1,2-di-(5Z,8Z,11Z,14Z)-eicosatetraenoyl-sn-glycerol + phosphate. The enzyme catalyses 1,2-di-(9Z,12Z-octadecadienoyl)-sn-glycero-3-phosphate + H2O = 1,2-di-(9Z,12Z-octadecadienoyl)-sn-glycerol + phosphate. It carries out the reaction 1,2-di-(9Z-octadecenoyl)-sn-glycero-3-phosphate + H2O = 1,2-di-(9Z-octadecenoyl)-sn-glycerol + phosphate. It catalyses the reaction 1,2-dihexadecanoyl-sn-glycero-3-phosphate + H2O = 1,2-dihexadecanoyl-sn-glycerol + phosphate. With respect to regulation, inhibited by N-ethylmaleimide treatment. In terms of biological role, acts as a magnesium-dependent phosphatidate phosphatase enzyme which catalyzes the conversion of phosphatidic acid to diacylglycerol during triglyceride, phosphatidylcholine and phosphatidylethanolamine biosynthesis and therefore controls the metabolism of fatty acids at different levels. Is involved in adipocyte differentiation. Also acts as nuclear transcriptional coactivator for PPARGC1A/PPARA regulatory pathway to modulate lipid metabolism gene expression. Functionally, recruited at the mitochondrion outer membrane and is involved in mitochondrial fission by converting phosphatidic acid to diacylglycerol. The chain is Phosphatidate phosphatase LPIN1 (Lpin1) from Mus musculus (Mouse).